Consider the following 297-residue polypeptide: NAC domain-containing protein 72 (297 aa).

The NAC domain maps to 14-162 (LPPGFRFYPT…DWVLCRIYKK (149 aa)). Residues 111–168 (VGIKKALVFYAGKAPKGTKTNWIMHEYRLIEHSRSHGSSKLDDWVLCRIYKKTSGSQR) mediate DNA binding. 2 disordered regions span residues 168 to 195 (RQAV…SQLD) and 259 to 278 (GEAE…LTQS). A compositionally biased stretch (polar residues) spans 266-277 (VNRQQNSSGLTQ).

Expressed in leaves and in root pericycle and epidermis.

The protein localises to the nucleus. Functionally, transcription factors that bind specifically to the 5'-CATGTG-3' motif and with bipartite regions with 5'-CGTr-3' and 5'-YACG-3' as cores. Involved in the regulation of metabolic reprogramming during senescence by promoting the chloroplast protein degradation and the catabolism of lysine, phytol and free fatty acids via the induction of CV, LKR/SDH and PES1 expression. Also triggers the degradation of starch and the accumulation of mono- and disaccharides during senescence by enhancing the expression of AMY1, SFP1 and SWEET15. The chain is NAC domain-containing protein 72 from Arabidopsis thaliana (Mouse-ear cress).